We begin with the raw amino-acid sequence, 212 residues long: 3-isopropylmalate dehydratase small subunit (212 aa).

It belongs to the LeuD family. LeuD type 1 subfamily. Heterodimer of LeuC and LeuD.

The catalysed reaction is (2R,3S)-3-isopropylmalate = (2S)-2-isopropylmalate. Its pathway is amino-acid biosynthesis; L-leucine biosynthesis; L-leucine from 3-methyl-2-oxobutanoate: step 2/4. Catalyzes the isomerization between 2-isopropylmalate and 3-isopropylmalate, via the formation of 2-isopropylmaleate. The chain is 3-isopropylmalate dehydratase small subunit from Dechloromonas aromatica (strain RCB).